Consider the following 157-residue polypeptide: UPF0225 protein PA14_50900 (157 aa).

Belongs to the UPF0225 family.

The polypeptide is UPF0225 protein PA14_50900 (Pseudomonas aeruginosa (strain UCBPP-PA14)).